The chain runs to 501 residues: Ribose import ATP-binding protein RbsA (501 aa).

ABC transporter domains lie at 6 to 242 (LQLS…VGRK) and 253 to 495 (KHGE…VGKK). 38-45 (GENGAGKS) provides a ligand contact to ATP.

The protein belongs to the ABC transporter superfamily. Ribose importer (TC 3.A.1.2.1) family. In terms of assembly, the complex is composed of an ATP-binding protein (RbsA), two transmembrane proteins (RbsC) and a solute-binding protein (RbsB).

It is found in the cell inner membrane. It catalyses the reaction D-ribose(out) + ATP + H2O = D-ribose(in) + ADP + phosphate + H(+). Its function is as follows. Part of the ABC transporter complex RbsABC involved in ribose import. Responsible for energy coupling to the transport system. The protein is Ribose import ATP-binding protein RbsA of Vibrio parahaemolyticus serotype O3:K6 (strain RIMD 2210633).